A 190-amino-acid chain; its full sequence is Xanthine phosphoribosyltransferase (190 aa).

Residues Leu-20 and Asn-27 each coordinate xanthine. A 5-phospho-alpha-D-ribose 1-diphosphate-binding site is contributed by 128–132; that stretch reads ANGNA. Lys-156 serves as a coordination point for xanthine.

The protein belongs to the purine/pyrimidine phosphoribosyltransferase family. Xpt subfamily. In terms of assembly, homodimer.

It is found in the cytoplasm. The catalysed reaction is XMP + diphosphate = xanthine + 5-phospho-alpha-D-ribose 1-diphosphate. The protein operates within purine metabolism; XMP biosynthesis via salvage pathway; XMP from xanthine: step 1/1. In terms of biological role, converts the preformed base xanthine, a product of nucleic acid breakdown, to xanthosine 5'-monophosphate (XMP), so it can be reused for RNA or DNA synthesis. The sequence is that of Xanthine phosphoribosyltransferase from Clostridium novyi (strain NT).